The chain runs to 906 residues: Gamma-tubulin complex component 3 homolog (906 aa).

The span at 208 to 229 (GQQPSQQSTTTKGLPNTVSRNV) shows a compositional bias: polar residues. Positions 208–242 (GQQPSQQSTTTKGLPNTVSRNVPRTRREGDSSGSV) are disordered.

The protein belongs to the TUBGCP family. As to quaternary structure, interacts with gamma-tubulin.

It is found in the cytoplasm. The protein resides in the cytoskeleton. Its subcellular location is the microtubule organizing center. It localises to the centrosome. Functionally, necessary for the recruitment of gamma-tubulin to the centrosome and for the formation of a functional centrosome. The polypeptide is Gamma-tubulin complex component 3 homolog (tubgcp3) (Xenopus laevis (African clawed frog)).